A 329-amino-acid chain; its full sequence is uncharacterized protein (329 aa).

Positions 38-184 (IVKLILKSQE…MACLMRAKNF (147 aa)) constitute an SIS domain. 56–61 (GVGKSA) is an ATP binding site. 2 CBS domains span residues 211 to 267 (QTTN…GLSL) and 276 to 329 (TLKP…GLKA).

It belongs to the SIS family. GutQ/KpsF subfamily.

This is an uncharacterized protein from Helicobacter pylori (strain J99 / ATCC 700824) (Campylobacter pylori J99).